A 432-amino-acid chain; its full sequence is UPF0597 protein APJL_1638 (432 aa).

It belongs to the UPF0597 family.

The sequence is that of UPF0597 protein APJL_1638 from Actinobacillus pleuropneumoniae serotype 3 (strain JL03).